The primary structure comprises 142 residues: Large ribosomal subunit protein uL13 (142 aa).

Belongs to the universal ribosomal protein uL13 family. As to quaternary structure, part of the 50S ribosomal subunit.

This protein is one of the early assembly proteins of the 50S ribosomal subunit, although it is not seen to bind rRNA by itself. It is important during the early stages of 50S assembly. The sequence is that of Large ribosomal subunit protein uL13 from Francisella philomiragia subsp. philomiragia (strain ATCC 25017 / CCUG 19701 / FSC 153 / O#319-036).